Consider the following 459-residue polypeptide: Cobyrinate a,c-diamide synthase (459 aa).

The GATase cobBQ-type domain occupies 252–446; it reads TLALADDEAF…LHVHFAQRPE (195 aa). Cysteine 334 (nucleophile) is an active-site residue.

The protein belongs to the CobB/CbiA family. In terms of assembly, monomer. Mg(2+) serves as cofactor.

It carries out the reaction cob(II)yrinate + 2 L-glutamine + 2 ATP + 2 H2O = cob(II)yrinate a,c diamide + 2 L-glutamate + 2 ADP + 2 phosphate + 2 H(+). It participates in cofactor biosynthesis; adenosylcobalamin biosynthesis; cob(II)yrinate a,c-diamide from sirohydrochlorin (anaerobic route): step 10/10. Catalyzes the ATP-dependent amidation of the two carboxylate groups at positions a and c of cobyrinate, using either L-glutamine or ammonia as the nitrogen source. Is able to use other nucleotide triphosphates as substrate, such as GTP or UTP, although less efficiently than ATP. The sequence is that of Cobyrinate a,c-diamide synthase from Salmonella typhimurium (strain LT2 / SGSC1412 / ATCC 700720).